The chain runs to 243 residues: Type III pantothenate kinase (243 aa).

Position 7–14 (7–14) interacts with ATP; sequence DIGNTRLK. Residues Y95 and 102-105 each bind substrate; that span reads GIDR. D104 serves as the catalytic Proton acceptor. Residue T126 coordinates ATP. T177 is a substrate binding site.

Belongs to the type III pantothenate kinase family. Homodimer. It depends on NH4(+) as a cofactor. Requires K(+) as cofactor.

The protein resides in the cytoplasm. The enzyme catalyses (R)-pantothenate + ATP = (R)-4'-phosphopantothenate + ADP + H(+). Its pathway is cofactor biosynthesis; coenzyme A biosynthesis; CoA from (R)-pantothenate: step 1/5. Functionally, catalyzes the phosphorylation of pantothenate (Pan), the first step in CoA biosynthesis. This Acinetobacter baylyi (strain ATCC 33305 / BD413 / ADP1) protein is Type III pantothenate kinase.